We begin with the raw amino-acid sequence, 624 residues long: ADP,ATP carrier protein 1, chloroplastic (624 aa).

A chloroplast-targeting transit peptide spans 1-79 (MEAVIQTRGL…KERSTEFICK (79 aa)). Ala-80 carries the N-acetylalanine modification. Helical transmembrane passes span 108–128 (VEVATLKKIIPLGLMFFCILF), 182–202 (ALFYTVIVPFIIYFGAFGFVM), 240–260 (LFYVMAELWGSVVVSVLFWGF), 315–335 (AMMSIVVGMGLAICLLYWWVN), 446–466 (LLTGVAFFSLILFGGPFAPLV), and 545–565 (LANSTPYLGMILLVIVTAWLA). A disordered region spans residues 579–624 (SEEELEKEMERASSVKIPVVSQDESGNGSLGESPSSSPEKSAPTNL). Over residues 602-624 (ESGNGSLGESPSSSPEKSAPTNL) the composition is skewed to low complexity.

This sequence belongs to the ADP/ATP translocase tlc (TC 2.A.12.2) family.

It localises to the plastid. Its subcellular location is the chloroplast membrane. Functionally, may function as an ATP importer. In Arabidopsis thaliana (Mouse-ear cress), this protein is ADP,ATP carrier protein 1, chloroplastic (AATP1).